The chain runs to 215 residues: Ras-related protein Rab-5A (215 aa).

The GTP site is built by serine 29, alanine 30, glycine 32, lysine 33, serine 34, serine 35, histidine 46, glutamate 47, threonine 52, and glycine 78. Residue serine 34 coordinates Mg(2+). Short sequence motifs (switch) lie at residues 44–56 (QFHE…IGAA) and 77–93 (AGQE…YRGA). Threonine 52 is a Mg(2+) binding site. Phosphoserine is present on serine 84. GTP contacts are provided by asparagine 133, lysine 134, aspartate 136, alanine 164, and lysine 165. The disordered stretch occupies residues 181-215 (LPKNEPQNPGANSARGRGVDLTEPAQPARSQCCSN). Residues cysteine 212 and cysteine 213 are each lipidated (S-geranylgeranyl cysteine).

The protein belongs to the small GTPase superfamily. Rab family. Interacts with GDI1; this promotes dissociation from membranes; phosphorylation at Ser-84 disrupts this interaction. Interacts with GDI2; phosphorylation at Ser-84 disrupts the interaction. Interacts with EEA1. Interacts with RIN1 and GAPVD1, which regulate its pathway, probably by acting as a GEF. Interacts with RINL. Interacts with ALS2CL, SUN2, ZFYVE20 and RUFY1. Interacts with RABEP1; one RABEP1 homodimer binds two RAB5A chains, but at opposite sides of the dimer. Interacts with SGSM1 and SGSM3. Interacts with PIK3CB. Interacts with OCRL and INPP5F. May be a component of a complex composed of RAB5A, DYN2 and PIK3C3. Does not interact with BLOC-3 complex (heterodimer of HPS1 and HPS4). Interacts with CLN5. Interacts with APPL2. Interacts with F8A1/F8A2/F8A3. Found in a complex with F8A1/F8A2/F8A3, HTT and RAB5A; mediates the recruitment of HTT by RAB5A onto early endosomes. Interacts with ATP9A. Interacts with PPP1R21; mediates the recruitment of FERRY complex by RAB5A onto early endosomes. The cofactor is Mg(2+). In terms of processing, phosphorylation of Ser-84 in the switch II region by LRRK2 prevents the association of RAB regulatory proteins, including RAB GDP dissociation inhibitors GDI1 and GDI2.

It is found in the cell membrane. The protein localises to the early endosome membrane. Its subcellular location is the melanosome. The protein resides in the cytoplasmic vesicle. It localises to the cell projection. It is found in the ruffle. The protein localises to the membrane. Its subcellular location is the cytoplasm. The protein resides in the cytosol. It localises to the phagosome membrane. It is found in the endosome membrane. It carries out the reaction GTP + H2O = GDP + phosphate + H(+). Regulated by guanine nucleotide exchange factors (GEFs) including RINL, which promote the exchange of bound GDP for free GTP. Regulated by GTPase activating proteins (GAPs) which increase the GTP hydrolysis activity. Inhibited by GDP dissociation inhibitors (GDIs). In terms of biological role, the small GTPases Rab are key regulators of intracellular membrane trafficking, from the formation of transport vesicles to their fusion with membranes. Rabs cycle between an inactive GDP-bound form and an active GTP-bound form that is able to recruit to membranes different sets of downstream effectors directly responsible for vesicle formation, movement, tethering and fusion. RAB5A is required for the fusion of plasma membranes and early endosomes. Contributes to the regulation of filopodia extension. Required for the exosomal release of SDCBP, CD63, PDCD6IP and syndecan. Regulates maturation of apoptotic cell-containing phagosomes, probably downstream of DYN2 and PIK3C3. The polypeptide is Ras-related protein Rab-5A (Mus musculus (Mouse)).